Here is a 267-residue protein sequence, read N- to C-terminus: Aspartate/glutamate leucyltransferase (267 aa).

Residues 246–267 (EQEEQTRPLFRPSATGFSTGQE) are disordered.

It belongs to the R-transferase family. Bpt subfamily.

Its subcellular location is the cytoplasm. The catalysed reaction is N-terminal L-glutamyl-[protein] + L-leucyl-tRNA(Leu) = N-terminal L-leucyl-L-glutamyl-[protein] + tRNA(Leu) + H(+). The enzyme catalyses N-terminal L-aspartyl-[protein] + L-leucyl-tRNA(Leu) = N-terminal L-leucyl-L-aspartyl-[protein] + tRNA(Leu) + H(+). Its function is as follows. Functions in the N-end rule pathway of protein degradation where it conjugates Leu from its aminoacyl-tRNA to the N-termini of proteins containing an N-terminal aspartate or glutamate. The polypeptide is Aspartate/glutamate leucyltransferase (Granulibacter bethesdensis (strain ATCC BAA-1260 / CGDNIH1)).